The primary structure comprises 229 residues: Demethylmenaquinone methyltransferase (229 aa).

S-adenosyl-L-methionine is bound by residues Thr57, Asp77, and 101–102 (DV).

The protein belongs to the class I-like SAM-binding methyltransferase superfamily. MenG/UbiE family.

The enzyme catalyses a 2-demethylmenaquinol + S-adenosyl-L-methionine = a menaquinol + S-adenosyl-L-homocysteine + H(+). Its pathway is quinol/quinone metabolism; menaquinone biosynthesis; menaquinol from 1,4-dihydroxy-2-naphthoate: step 2/2. Methyltransferase required for the conversion of demethylmenaquinol (DMKH2) to menaquinol (MKH2). The sequence is that of Demethylmenaquinone methyltransferase from Chlamydia trachomatis serovar A (strain ATCC VR-571B / DSM 19440 / HAR-13).